The chain runs to 552 residues: Chaperonin GroEL 3 (552 aa).

ATP contacts are provided by residues 30 to 33, Lys-51, 87 to 91, Gly-415, and Asp-495; these read TLGP and DGTTT.

Belongs to the chaperonin (HSP60) family. Forms a cylinder of 14 subunits composed of two heptameric rings stacked back-to-back. Interacts with the co-chaperonin GroES.

Its subcellular location is the cytoplasm. The catalysed reaction is ATP + H2O + a folded polypeptide = ADP + phosphate + an unfolded polypeptide.. Its function is as follows. Together with its co-chaperonin GroES, plays an essential role in assisting protein folding. The GroEL-GroES system forms a nano-cage that allows encapsulation of the non-native substrate proteins and provides a physical environment optimized to promote and accelerate protein folding. The polypeptide is Chaperonin GroEL 3 (Mesorhizobium japonicum (strain LMG 29417 / CECT 9101 / MAFF 303099) (Mesorhizobium loti (strain MAFF 303099))).